We begin with the raw amino-acid sequence, 901 residues long: Mediator of RNA polymerase II transcription subunit 14 (901 aa).

The protein belongs to the Mediator complex subunit 14 family. In terms of assembly, component of the Mediator complex.

The protein resides in the nucleus. Functionally, component of the Mediator complex, a coactivator involved in the regulated transcription of nearly all RNA polymerase II-dependent genes. Mediator functions as a bridge to convey information from gene-specific regulatory proteins to the basal RNA polymerase II transcription machinery. Mediator is recruited to promoters by direct interactions with regulatory proteins and serves as a scaffold for the assembly of a functional preinitiation complex with RNA polymerase II and the general transcription factors. The sequence is that of Mediator of RNA polymerase II transcription subunit 14 (RGR1) from Yarrowia lipolytica (strain CLIB 122 / E 150) (Yeast).